Reading from the N-terminus, the 366-residue chain is Chorismate synthase (366 aa).

NADP(+) contacts are provided by Arg48 and Arg54. Residues 125-127, 238-239, Gly278, 293-297, and Arg319 each bind FMN; these read RSS, NA, and KPTSS.

Belongs to the chorismate synthase family. As to quaternary structure, homotetramer. The cofactor is FMNH2.

It catalyses the reaction 5-O-(1-carboxyvinyl)-3-phosphoshikimate = chorismate + phosphate. Its pathway is metabolic intermediate biosynthesis; chorismate biosynthesis; chorismate from D-erythrose 4-phosphate and phosphoenolpyruvate: step 7/7. Its function is as follows. Catalyzes the anti-1,4-elimination of the C-3 phosphate and the C-6 proR hydrogen from 5-enolpyruvylshikimate-3-phosphate (EPSP) to yield chorismate, which is the branch point compound that serves as the starting substrate for the three terminal pathways of aromatic amino acid biosynthesis. This reaction introduces a second double bond into the aromatic ring system. In Neisseria meningitidis serogroup B (strain ATCC BAA-335 / MC58), this protein is Chorismate synthase.